A 415-amino-acid polypeptide reads, in one-letter code: Serine hydroxymethyltransferase (415 aa).

Residues L117 and 121–123 (GHL) each bind (6S)-5,6,7,8-tetrahydrofolate. At K226 the chain carries N6-(pyridoxal phosphate)lysine.

This sequence belongs to the SHMT family. In terms of assembly, homodimer. It depends on pyridoxal 5'-phosphate as a cofactor.

Its subcellular location is the cytoplasm. It catalyses the reaction (6R)-5,10-methylene-5,6,7,8-tetrahydrofolate + glycine + H2O = (6S)-5,6,7,8-tetrahydrofolate + L-serine. It participates in one-carbon metabolism; tetrahydrofolate interconversion. Its pathway is amino-acid biosynthesis; glycine biosynthesis; glycine from L-serine: step 1/1. In terms of biological role, catalyzes the reversible interconversion of serine and glycine with tetrahydrofolate (THF) serving as the one-carbon carrier. This reaction serves as the major source of one-carbon groups required for the biosynthesis of purines, thymidylate, methionine, and other important biomolecules. Also exhibits THF-independent aldolase activity toward beta-hydroxyamino acids, producing glycine and aldehydes, via a retro-aldol mechanism. The sequence is that of Serine hydroxymethyltransferase from Leptospira interrogans serogroup Icterohaemorrhagiae serovar copenhageni (strain Fiocruz L1-130).